We begin with the raw amino-acid sequence, 211 residues long: Protein Nef (211 aa).

The interval 1-38 (MGNAWSKSKFAGWSEVRDRMRRSSSDPQQPCAPGVGAV) is disordered. G2 carries the N-myristoyl glycine; by host lipid modification. Residue S6 is modified to Phosphoserine; by host. The segment covering 15-24 (EVRDRMRRSS) has biased composition (basic and acidic residues). The interval 67-70 (KDED) is acidic; interacts with host PACS1 and PACS2; stabilizes the interaction of NEF/MHC-I with host AP1M1; necessary for MHC-I internalization. The SH3-binding; interaction with Src family tyrosine kinases stretch occupies residues 74-83 (PVRPQVPLRP). Residues 77-80 (PQVP) carry the PxxP; stabilizes the interaction of NEF/MHC-I with host AP1M1; necessary for MHC-I internalization motif. The mediates dimerization, Nef-PTE1 interaction stretch occupies residues 113-129 (EILDLWIYHTQGFFPDW). A binding to ATP6V1H region spans residues 153-186 (VSAEEAERLGNTNEDASLLHPACNHGAEDAHGEI). Residues 170-171 (LL) carry the Dileucine internalization motif; necessary for CD4 internalization motif. The short motif at 180–181 (ED) is the Diacidic; necessary for CD4 internalization element.

This sequence belongs to the lentivirus primate group Nef protein family. As to quaternary structure, monomer; cytosolic form. Homodimer; membrane bound form. Interacts with Nef associated p21-activated kinase (PAK2); this interaction activates PAK2. Associates with the Nef-MHC-I-AP1 complex; this complex is required for MHC-I internalization. Interacts (via C-terminus) with host PI3-kinase. Interacts with host PACS1; this interaction seems to be weak. Interacts with host PACS2. Interacts with host LCK and MAPK3; these interactions inhibit the kinase activity of the latter. Interacts with host ATP6V1H; this interaction may play a role in CD4 endocytosis. Associates with the CD4-Nef-AP2 complex; this complex is required for CD4 internalization. Interacts with host AP2 subunit alpha and AP2 subunit sigma2. Interacts with TCR-zeta chain; this interaction up-regulates the Fas ligand (FasL) surface expression. Interacts with host HCK, LYN, and SRC; these interactions activate the Src family kinases. Interacts with MAP3K5; this interaction inhibits the Fas and TNFR-mediated death signals. Interacts with beta-COP and PTE1. Interacts with human RACK1; this increases Nef phosphorylation by PKC. Interacts with TP53; this interaction decreases the half-life of TP53, protecting the infected cell against p53-mediated apoptosis. The virion-associated Nef proteins are cleaved by the viral protease to release the soluble C-terminal core protein. Nef is probably cleaved concomitantly with viral structural proteins on maturation of virus particles. In terms of processing, myristoylated. Post-translationally, phosphorylated on serine residues, probably by host PKCdelta and theta.

It localises to the host cell membrane. It is found in the virion. The protein localises to the secreted. Its subcellular location is the host Golgi apparatus membrane. Its function is as follows. Factor of infectivity and pathogenicity, required for optimal virus replication. Alters numerous pathways of T-lymphocyte function and down-regulates immunity surface molecules in order to evade host defense and increase viral infectivity. Alters the functionality of other immunity cells, like dendritic cells, monocytes/macrophages and NK cells. In infected CD4(+) T-lymphocytes, down-regulates the surface MHC-I, mature MHC-II, CD4, CD28, CCR5 and CXCR4 molecules. Mediates internalization and degradation of host CD4 through the interaction of with the cytoplasmic tail of CD4, the recruitment of AP-2 (clathrin adapter protein complex 2), internalization through clathrin coated pits, and subsequent transport to endosomes and lysosomes for degradation. Diverts host MHC-I molecules to the trans-Golgi network-associated endosomal compartments by an endocytic pathway to finally target them for degradation. MHC-I down-regulation may involve AP-1 (clathrin adapter protein complex 1) or possibly Src family kinase-ZAP70/Syk-PI3K cascade recruited by PACS2. In consequence infected cells are masked for immune recognition by cytotoxic T-lymphocytes. Decreasing the number of immune receptors also prevents reinfection by more HIV particles (superinfection). Down-regulates host SERINC3 and SERINC5 thereby excluding these proteins from the viral particles. Virion infectivity is drastically higher when SERINC3 or SERINC5 are excluded from the viral envelope, because these host antiviral proteins impair the membrane fusion event necessary for subsequent virion penetration. In terms of biological role, bypasses host T-cell signaling by inducing a transcriptional program nearly identical to that of anti-CD3 cell activation. Interaction with TCR-zeta chain up-regulates the Fas ligand (FasL). Increasing surface FasL molecules and decreasing surface MHC-I molecules on infected CD4(+) cells send attacking cytotoxic CD8+ T-lymphocytes into apoptosis. Functionally, plays a role in optimizing the host cell environment for viral replication without causing cell death by apoptosis. Protects the infected cells from apoptosis in order to keep them alive until the next virus generation is ready to strike. Inhibits the Fas and TNFR-mediated death signals by blocking MAP3K5/ASK1. Decreases the half-life of TP53, protecting the infected cell against p53-mediated apoptosis. Inhibits the apoptotic signals regulated by the Bcl-2 family proteins through the formation of a Nef/PI3-kinase/PAK2 complex that leads to activation of PAK2 and induces phosphorylation of host BAD. Its function is as follows. Extracellular Nef protein targets CD4(+) T-lymphocytes for apoptosis by interacting with CXCR4 surface receptors. This is Protein Nef from Human immunodeficiency virus type 1 group O (isolate MVP5180) (HIV-1).